The chain runs to 251 residues: tRNA-uridine aminocarboxypropyltransferase 2 (251 aa).

Zn(2+) is bound by residues cysteine 23, cysteine 26, cysteine 33, and cysteine 35. A DXTW motif is present at residues 131-134 (DGTW).

The protein belongs to the TDD superfamily. DTWD2 family.

The catalysed reaction is a uridine in tRNA + S-adenosyl-L-methionine = a 3-[(3S)-3-amino-3-carboxypropyl]uridine in tRNA + S-methyl-5'-thioadenosine + H(+). Catalyzes the formation of 3-(3-amino-3-carboxypropyl)uridine (acp3U) at position 20a in the D-loop of several cytoplasmic tRNAs (acp3U(20a)). The chain is tRNA-uridine aminocarboxypropyltransferase 2 from Drosophila melanogaster (Fruit fly).